The sequence spans 303 residues: Methionyl-tRNA formyltransferase (303 aa).

108-111 (SDLP) is a binding site for (6S)-5,6,7,8-tetrahydrofolate.

The protein belongs to the Fmt family.

It carries out the reaction L-methionyl-tRNA(fMet) + (6R)-10-formyltetrahydrofolate = N-formyl-L-methionyl-tRNA(fMet) + (6S)-5,6,7,8-tetrahydrofolate + H(+). In terms of biological role, attaches a formyl group to the free amino group of methionyl-tRNA(fMet). The formyl group appears to play a dual role in the initiator identity of N-formylmethionyl-tRNA by promoting its recognition by IF2 and preventing the misappropriation of this tRNA by the elongation apparatus. This chain is Methionyl-tRNA formyltransferase, found in Rickettsia typhi (strain ATCC VR-144 / Wilmington).